We begin with the raw amino-acid sequence, 353 residues long: S-adenosylmethionine decarboxylase proenzyme (353 aa).

Active-site residues include glutamate 9 and glutamate 12. The active-site Schiff-base intermediate with substrate; via pyruvic acid is the serine 69. Pyruvic acid (Ser); by autocatalysis is present on serine 69. Residue cysteine 83 is the Proton donor; for catalytic activity of the active site. Catalysis depends on proton acceptor; for processing activity residues serine 232 and histidine 245.

The protein belongs to the eukaryotic AdoMetDC family. Pyruvate serves as cofactor. Is synthesized initially as an inactive proenzyme. Formation of the active enzyme involves a self-maturation process in which the active site pyruvoyl group is generated from an internal serine residue via an autocatalytic post-translational modification. Two non-identical subunits are generated from the proenzyme in this reaction, and the pyruvate is formed at the N-terminus of the alpha chain, which is derived from the carboxyl end of the proenzyme. The post-translation cleavage follows an unusual pathway, termed non-hydrolytic serinolysis, in which the side chain hydroxyl group of the serine supplies its oxygen atom to form the C-terminus of the beta chain, while the remainder of the serine residue undergoes an oxidative deamination to produce ammonia and the pyruvoyl group blocking the N-terminus of the alpha chain.

The enzyme catalyses S-adenosyl-L-methionine + H(+) = S-adenosyl 3-(methylsulfanyl)propylamine + CO2. Its pathway is amine and polyamine biosynthesis; S-adenosylmethioninamine biosynthesis; S-adenosylmethioninamine from S-adenosyl-L-methionine: step 1/1. The sequence is that of S-adenosylmethionine decarboxylase proenzyme (SAMDC) from Pisum sativum (Garden pea).